Consider the following 156-residue polypeptide: ATP synthase subunit b (156 aa).

A helical transmembrane segment spans residues 12-32; sequence IAFAIFVLFCMKFIWPALMGA.

It belongs to the ATPase B chain family. F-type ATPases have 2 components, F(1) - the catalytic core - and F(0) - the membrane proton channel. F(1) has five subunits: alpha(3), beta(3), gamma(1), delta(1), epsilon(1). F(0) has three main subunits: a(1), b(2) and c(10-14). The alpha and beta chains form an alternating ring which encloses part of the gamma chain. F(1) is attached to F(0) by a central stalk formed by the gamma and epsilon chains, while a peripheral stalk is formed by the delta and b chains.

The protein localises to the cell inner membrane. In terms of biological role, f(1)F(0) ATP synthase produces ATP from ADP in the presence of a proton or sodium gradient. F-type ATPases consist of two structural domains, F(1) containing the extramembraneous catalytic core and F(0) containing the membrane proton channel, linked together by a central stalk and a peripheral stalk. During catalysis, ATP synthesis in the catalytic domain of F(1) is coupled via a rotary mechanism of the central stalk subunits to proton translocation. Its function is as follows. Component of the F(0) channel, it forms part of the peripheral stalk, linking F(1) to F(0). The protein is ATP synthase subunit b of Psychrobacter sp. (strain PRwf-1).